A 252-amino-acid chain; its full sequence is Phosphoribosylaminoimidazole-succinocarboxamide synthase 1 (252 aa).

This sequence belongs to the SAICAR synthetase family.

The enzyme catalyses 5-amino-1-(5-phospho-D-ribosyl)imidazole-4-carboxylate + L-aspartate + ATP = (2S)-2-[5-amino-1-(5-phospho-beta-D-ribosyl)imidazole-4-carboxamido]succinate + ADP + phosphate + 2 H(+). Its pathway is purine metabolism; IMP biosynthesis via de novo pathway; 5-amino-1-(5-phospho-D-ribosyl)imidazole-4-carboxamide from 5-amino-1-(5-phospho-D-ribosyl)imidazole-4-carboxylate: step 1/2. This is Phosphoribosylaminoimidazole-succinocarboxamide synthase 1 (purC1) from Caulobacter vibrioides (strain ATCC 19089 / CIP 103742 / CB 15) (Caulobacter crescentus).